We begin with the raw amino-acid sequence, 725 residues long: Ribonuclease Y (725 aa).

A helical membrane pass occupies residues 4 to 24 (VLVILLSLVLLVLVALILAVA). Disordered regions lie at residues 62–140 (DGPA…ASDT), 165–195 (VAAT…SVRR), and 300–321 (EQRV…AGRE). Composition is skewed to low complexity over residues 84–100 (DAPG…PDAG) and 114–137 (AAAP…PADA). A KH domain is found at 415–481 (VVTVLHLPGD…RITLAALVSD (67 aa)). Positions 541–634 (VLAHLIESAH…TQAADQISGG (94 aa)) constitute an HD domain.

The protein belongs to the RNase Y family.

The protein localises to the cell membrane. In terms of biological role, endoribonuclease that initiates mRNA decay. This is Ribonuclease Y from Frankia alni (strain DSM 45986 / CECT 9034 / ACN14a).